The following is a 282-amino-acid chain: 4-diphosphocytidyl-2-C-methyl-D-erythritol kinase (282 aa).

Lysine 12 is an active-site residue. An ATP-binding site is contributed by 95 to 105 (PMGGGIGGGSS). The active site involves aspartate 137.

Belongs to the GHMP kinase family. IspE subfamily.

It carries out the reaction 4-CDP-2-C-methyl-D-erythritol + ATP = 4-CDP-2-C-methyl-D-erythritol 2-phosphate + ADP + H(+). The protein operates within isoprenoid biosynthesis; isopentenyl diphosphate biosynthesis via DXP pathway; isopentenyl diphosphate from 1-deoxy-D-xylulose 5-phosphate: step 3/6. Catalyzes the phosphorylation of the position 2 hydroxy group of 4-diphosphocytidyl-2C-methyl-D-erythritol. This Pseudomonas aeruginosa (strain UCBPP-PA14) protein is 4-diphosphocytidyl-2-C-methyl-D-erythritol kinase.